A 459-amino-acid polypeptide reads, in one-letter code: DNA damage-inducible protein F (459 aa).

Transmembrane regions (helical) follow at residues 2–22 (PPGVAVCFSSLFIRLVCMAFL), 29–49 (LWHLALPMIFSNITVPLLGLV), 63–83 (LGGVAVGATATSFLFMLLLFL), 111–131 (LLLALGAGALIALLRTPIIDL), 154–174 (WLSAPASLANLVLLGWLLGVQ), 180–200 (VILLVVGNILNIVLDVWLVMG), 207–227 (GAALATVIAEYATLLIGLLMV), 265–285 (LLQLCFGAITVLGARLGSDII), 289–309 (AVLMTLLTFTAYALDGFAYAV), 338–358 (IVALLFSVVYLLAGEHIIALL), 373–393 (IWQVILPVVGVWCYLLDGMFI), and 416–436 (LLTLPWLGNHALWLALTVFLA).

This sequence belongs to the multi antimicrobial extrusion (MATE) (TC 2.A.66.1) family.

The protein localises to the cell inner membrane. This chain is DNA damage-inducible protein F (dinF), found in Escherichia coli (strain K12).